Here is a 221-residue protein sequence, read N- to C-terminus: Thiamine-phosphate synthase (221 aa).

4-amino-2-methyl-5-(diphosphooxymethyl)pyrimidine contacts are provided by residues 44 to 48 (QFREK) and N79. Mg(2+)-binding residues include D80 and D99. S117 serves as a coordination point for 4-amino-2-methyl-5-(diphosphooxymethyl)pyrimidine. 143–145 (TSS) is a binding site for 2-[(2R,5Z)-2-carboxy-4-methylthiazol-5(2H)-ylidene]ethyl phosphate. 4-amino-2-methyl-5-(diphosphooxymethyl)pyrimidine is bound at residue K146. 2-[(2R,5Z)-2-carboxy-4-methylthiazol-5(2H)-ylidene]ethyl phosphate contacts are provided by residues G175 and 195 to 196 (IS).

Belongs to the thiamine-phosphate synthase family. Mg(2+) is required as a cofactor.

The catalysed reaction is 2-[(2R,5Z)-2-carboxy-4-methylthiazol-5(2H)-ylidene]ethyl phosphate + 4-amino-2-methyl-5-(diphosphooxymethyl)pyrimidine + 2 H(+) = thiamine phosphate + CO2 + diphosphate. The enzyme catalyses 2-(2-carboxy-4-methylthiazol-5-yl)ethyl phosphate + 4-amino-2-methyl-5-(diphosphooxymethyl)pyrimidine + 2 H(+) = thiamine phosphate + CO2 + diphosphate. It catalyses the reaction 4-methyl-5-(2-phosphooxyethyl)-thiazole + 4-amino-2-methyl-5-(diphosphooxymethyl)pyrimidine + H(+) = thiamine phosphate + diphosphate. Its pathway is cofactor biosynthesis; thiamine diphosphate biosynthesis; thiamine phosphate from 4-amino-2-methyl-5-diphosphomethylpyrimidine and 4-methyl-5-(2-phosphoethyl)-thiazole: step 1/1. In terms of biological role, condenses 4-methyl-5-(beta-hydroxyethyl)thiazole monophosphate (THZ-P) and 2-methyl-4-amino-5-hydroxymethyl pyrimidine pyrophosphate (HMP-PP) to form thiamine monophosphate (TMP). This is Thiamine-phosphate synthase from Geobacillus kaustophilus (strain HTA426).